Consider the following 559-residue polypeptide: Oxygen-dependent choline dehydrogenase (559 aa).

Residue 4-33 participates in FAD binding; it reads DYIIIGAGSAGNVLATRLTEDSDVTVLLLE. H473 (proton acceptor) is an active-site residue.

It belongs to the GMC oxidoreductase family. Requires FAD as cofactor.

The catalysed reaction is choline + A = betaine aldehyde + AH2. It carries out the reaction betaine aldehyde + NAD(+) + H2O = glycine betaine + NADH + 2 H(+). The protein operates within amine and polyamine biosynthesis; betaine biosynthesis via choline pathway; betaine aldehyde from choline (cytochrome c reductase route): step 1/1. Involved in the biosynthesis of the osmoprotectant glycine betaine. Catalyzes the oxidation of choline to betaine aldehyde and betaine aldehyde to glycine betaine at the same rate. The protein is Oxygen-dependent choline dehydrogenase of Cronobacter sakazakii (strain ATCC BAA-894) (Enterobacter sakazakii).